Here is a 111-residue protein sequence, read N- to C-terminus: Ig kappa chain V-III region PC 2485/PC 4039 (111 aa).

The interval aspartate 1–cysteine 23 is framework-1. A disulfide bridge connects residues cysteine 23 and cysteine 92. Residues arginine 24–histidine 38 are complementarity-determining-1. Positions tryptophan 39–tyrosine 53 are framework-2. The tract at residues leucine 54–serine 60 is complementarity-determining-2. The framework-3 stretch occupies residues glycine 61–cysteine 92. Positions glutamine 93–threonine 101 are complementarity-determining-3. Residues phenylalanine 102–lysine 111 are framework-4.

This Mus musculus (Mouse) protein is Ig kappa chain V-III region PC 2485/PC 4039.